Consider the following 345-residue polypeptide: Dihydroorotase (345 aa).

Zn(2+)-binding residues include H13 and H15. Residues 15–17 (HFR) and N41 each bind substrate. Residues K98, H135, and H173 each coordinate Zn(2+). K98 carries the N6-carboxylysine modification. Residue H135 participates in substrate binding. L218 is a substrate binding site. D246 lines the Zn(2+) pocket. Residue D246 is part of the active site. Residues H250 and A262 each coordinate substrate.

It belongs to the metallo-dependent hydrolases superfamily. DHOase family. Class II DHOase subfamily. As to quaternary structure, homodimer. The cofactor is Zn(2+).

The catalysed reaction is (S)-dihydroorotate + H2O = N-carbamoyl-L-aspartate + H(+). Its pathway is pyrimidine metabolism; UMP biosynthesis via de novo pathway; (S)-dihydroorotate from bicarbonate: step 3/3. Functionally, catalyzes the reversible cyclization of carbamoyl aspartate to dihydroorotate. The sequence is that of Dihydroorotase from Shewanella halifaxensis (strain HAW-EB4).